We begin with the raw amino-acid sequence, 180 residues long: UPF0227 protein CKO_01948 (180 aa).

Belongs to the UPF0227 family.

The sequence is that of UPF0227 protein CKO_01948 from Citrobacter koseri (strain ATCC BAA-895 / CDC 4225-83 / SGSC4696).